Here is a 226-residue protein sequence, read N- to C-terminus: Exosome complex component Rrp4 (226 aa).

The S1 motif domain occupies 61–135 (NDLVIGKVNS…RDPLVSISDR (75 aa)). In terms of domain architecture, KH spans 141-200 (DSGVLMEISPSKVPRLIGKKGSMIQMIEEATDAAVTIGQNGWVVVSCESPEGLLKAKKAI).

This sequence belongs to the RRP4 family. Component of the archaeal exosome complex. Forms a trimer of Rrp4 and/or Csl4 subunits. The trimer associates with a hexameric ring-like arrangement composed of 3 Rrp41-Rrp42 heterodimers.

Its subcellular location is the cytoplasm. Its function is as follows. Non-catalytic component of the exosome, which is a complex involved in RNA degradation. Increases the RNA binding and the efficiency of RNA degradation. Confers strong poly(A) specificity to the exosome. The sequence is that of Exosome complex component Rrp4 from Nitrosopumilus maritimus (strain SCM1).